The following is a 328-amino-acid chain: Gonadotropin-releasing hormone receptor (328 aa).

The Extracellular portion of the chain corresponds to 1 to 38 (MANRAYLEQKQTQCSIINSSFSMTHRDLPTLTLSGKIR). N-linked (GlcNAc...) asparagine glycosylation occurs at asparagine 18. Residues 39–58 (VMVTFFLFLVSTAFNASFLM) form a helical membrane-spanning segment. Residues 59-77 (KLQRQTQKKEEVKKLTRMK) lie on the Cytoplasmic side of the membrane. The chain crosses the membrane as a helical span at residues 78–97 (VLLKHLTLANLLETVIVMPL). Over 98 to 115 (DGIWNVTVQWYAGEFLCK) the chain is Extracellular. N-linked (GlcNAc...) asparagine glycosylation is present at asparagine 102. Cysteine 114 and cysteine 196 form a disulfide bridge. A helical transmembrane segment spans residues 116-137 (ALSYLKLFSMYAPAFMMVVISL). Residues 138-164 (DRFLAITRPLAVKSNTKVGQSLIAVAW) are Cytoplasmic-facing. Residues 165–184 (FLSIVLAGPQLYIFRMIYVE) form a helical membrane-spanning segment. Residues 185–212 (DISGQTGNFSQCVTHCSFPEWWQEAFYN) lie on the Extracellular side of the membrane. N-linked (GlcNAc...) asparagine glycosylation occurs at asparagine 192. Residues 213–232 (LLTFSCLFIGPLLIMLVCNA) traverse the membrane as a helical segment. Topologically, residues 233–281 (KIIFTLTQVLHQDPHELQLNRSKNNIPRARLRTLKMTVAFATLFTICWT) are cytoplasmic. The helical transmembrane segment at 282-300 (PYYVLGIWYWFDPEMLNRV) threads the bilayer. Topologically, residues 301 to 306 (SDPVNH) are extracellular. A helical membrane pass occupies residues 307 to 326 (FFFLFGLLNPCFDPLIYGYF). At 327–328 (SL) the chain is on the cytoplasmic side.

The protein belongs to the G-protein coupled receptor 1 family.

It is found in the cell membrane. Functionally, receptor for gonadotropin releasing hormone (GnRH) that mediates the action of GnRH to stimulate the secretion of the gonadotropic hormones luteinizing hormone (LH) and follicle-stimulating hormone (FSH). This receptor mediates its action by association with G-proteins that activate a phosphatidylinositol-calcium second messenger system. The protein is Gonadotropin-releasing hormone receptor (GNRHR) of Trichosurus vulpecula (Brush-tailed possum).